Consider the following 312-residue polypeptide: Olfactory receptor 2J2 (312 aa).

The Extracellular segment spans residues 1–26; sequence MMIKKNASSEDFFILLGFSNWPQLEV. The N-linked (GlcNAc...) asparagine glycan is linked to Asn6. Residues 27-50 traverse the membrane as a helical segment; the sequence is VLFVVILIFYLMTLTGNLFIIILS. Residues 51–58 are Cytoplasmic-facing; the sequence is YVDSHLHT. The helical transmembrane segment at 59–80 threads the bilayer; sequence PMYFFLSNLSFLDLCHTTSSIP. Over 81–101 the chain is Extracellular; sequence QLLVNLRGPEKTISYAGCMVQ. A disulfide bond links Cys98 and Cys190. Residues 102–121 form a helical membrane-spanning segment; that stretch reads LYFVLALGIAECVLLVVMSY. The Cytoplasmic segment spans residues 122–140; the sequence is DRYVAVCRPLHYTVLMHPR. Residues 141 to 159 traverse the membrane as a helical segment; that stretch reads FCHLLAAASWVIGFTISAL. Over 160 to 196 the chain is Extracellular; that stretch reads HSSFTFWVPLCGHRLVDHFFCEVPALLRLSCVDTHAN. The chain crosses the membrane as a helical span at residues 197-220; sequence ELTLMVMSSIFVLIPLILILTAYG. Topologically, residues 221–237 are cytoplasmic; it reads AIARAVLSMQSTTGLQK. Residues 238–260 form a helical membrane-spanning segment; sequence VFRTCGAHLMVVSLFFIPVMCMY. Over 261–273 the chain is Extracellular; sequence LQPPSENSPDQGK. The helical transmembrane segment at 274–293 threads the bilayer; the sequence is FIALFYTVVTPSLNPLIYTL. Topologically, residues 294–312 are cytoplasmic; the sequence is RNKHVKGAAKRLLGWEWGK.

This sequence belongs to the G-protein coupled receptor 1 family.

The protein localises to the cell membrane. In terms of biological role, odorant receptor. The polypeptide is Olfactory receptor 2J2 (OR2J2) (Homo sapiens (Human)).